A 417-amino-acid chain; its full sequence is 2-oxoglutarate and iron-dependent oxygenase JMJD4 (417 aa).

Residues 142 to 301 (CRDFPVEDVF…NMWRFLQQEL (160 aa)) form the JmjC domain. 3 residues coordinate Fe cation: H189, D191, and H269.

Belongs to the JMJD6 family. In terms of assembly, interacts with ETF1. Interacts with the ETF1-GSPT1 complex. It depends on Fe(2+) as a cofactor.

It is found in the cytoplasm. It catalyses the reaction L-lysyl-[protein] + 2-oxoglutarate + O2 = 4-hydroxy-L-lysyl-[protein] + succinate + CO2. In terms of biological role, catalyzes the 2-oxoglutarate and iron-dependent C4-lysyl hydroxylation of ETF1 at 'Lys-63' thereby promoting the translational termination efficiency of ETF1. The protein is 2-oxoglutarate and iron-dependent oxygenase JMJD4 (JMJD4) of Homo sapiens (Human).